The primary structure comprises 411 residues: MPSVLWVLFDGGADRPVGRKTPFYVAFKPTIDYLSSLGSCGMLDPISPGIRPGSDTAHLALFGYDPYKYYTGRGAFEALGADVALKPGDVAFRTNLATVDEAGVVIDRRAGRYIAPEEARSVEEVINKIGEEIGKKYGVDVFYKSTVEHRGVLVIRGPVSHRVSDTDPHRVGAKILRSEPLERSKEAALTAEVVNEITLRFMEISKELEINKARRLQGKLPINAILLRGGGYMPQIEPIREKYNIRAAAIAGVALIRGVARAVGMDVYTAPGLGGTKDDVFDQAVKLAVELMSKYDVVFLHVKGTDSTSHDGDFNGKVSVIERLDKALAPYLDKLLNNYFVVTSDHATPVSVKEHTGEPVPILLYGPDVVQDDVSKFSELTCWRGALGRIRGIDVMPILGSYLGLTEKFGE.

Belongs to the BPG-independent phosphoglycerate mutase family. A-PGAM subfamily.

The catalysed reaction is (2R)-2-phosphoglycerate = (2R)-3-phosphoglycerate. It participates in carbohydrate degradation; glycolysis; pyruvate from D-glyceraldehyde 3-phosphate: step 3/5. Catalyzes the interconversion of 2-phosphoglycerate and 3-phosphoglycerate. The protein is 2,3-bisphosphoglycerate-independent phosphoglycerate mutase of Pyrobaculum aerophilum (strain ATCC 51768 / DSM 7523 / JCM 9630 / CIP 104966 / NBRC 100827 / IM2).